Consider the following 80-residue polypeptide: Defensin-like protein 207 (80 aa).

Positions 1–29 (MAKNLNSVSFIVLLLVLLVASTEILKSDA) are cleaved as a signal peptide. Cystine bridges form between Cys-38/Cys-64, Cys-50/Cys-75, and Cys-54/Cys-77.

Belongs to the DEFL family.

It is found in the secreted. The polypeptide is Defensin-like protein 207 (Arabidopsis thaliana (Mouse-ear cress)).